The chain runs to 328 residues: Alanine racemase (328 aa).

The active-site Proton acceptor; specific for D-alanine is the Lys33. At Lys33 the chain carries N6-(pyridoxal phosphate)lysine. Arg118 lines the substrate pocket. Catalysis depends on Tyr237, which acts as the Proton acceptor; specific for L-alanine. Met283 lines the substrate pocket.

This sequence belongs to the alanine racemase family. Pyridoxal 5'-phosphate is required as a cofactor.

It carries out the reaction L-alanine = D-alanine. Its pathway is amino-acid biosynthesis; D-alanine biosynthesis; D-alanine from L-alanine: step 1/1. In terms of biological role, catalyzes the interconversion of L-alanine and D-alanine. May also act on other amino acids. This chain is Alanine racemase (alr), found in Campylobacter jejuni subsp. jejuni serotype O:2 (strain ATCC 700819 / NCTC 11168).